The chain runs to 295 residues: MSATIISGSLIASKFREELKQRVKILSETWMQPGLAVILAGDNPASCVYVRNKAKTCEELGIRSEIFNFPGDISQKALLQQIQDLNVNPEIHGILVQLPLPGHIRIDEVIAAIAIGKDVDGFHPCNVGALVTGHALFHPCTPFGVMKMLAEYDIPLQGQHAVIIGRSNIVGKPMALMLLEKGATVTVCTSRTRDLASHTRNADIVVMAAGKANLLTSDMIRTGATVIDVGINRLADGRLCGDVEFSGVKEKAGYITPVPGGVGPMTIVMLMNNTIEAAERAKAVALAGGWHSSVQ.

Residues 165–167 (GRS), S190, and I231 contribute to the NADP(+) site.

Belongs to the tetrahydrofolate dehydrogenase/cyclohydrolase family. In terms of assembly, homodimer.

The enzyme catalyses (6R)-5,10-methylene-5,6,7,8-tetrahydrofolate + NADP(+) = (6R)-5,10-methenyltetrahydrofolate + NADPH. It carries out the reaction (6R)-5,10-methenyltetrahydrofolate + H2O = (6R)-10-formyltetrahydrofolate + H(+). Its pathway is one-carbon metabolism; tetrahydrofolate interconversion. Catalyzes the oxidation of 5,10-methylenetetrahydrofolate to 5,10-methenyltetrahydrofolate and then the hydrolysis of 5,10-methenyltetrahydrofolate to 10-formyltetrahydrofolate. This Nitrosomonas europaea (strain ATCC 19718 / CIP 103999 / KCTC 2705 / NBRC 14298) protein is Bifunctional protein FolD.